A 499-amino-acid polypeptide reads, in one-letter code: MIESVMAVRLSTGFCSSTALLQYRTAPSSEEGGNCFHYASRRVFQPQRIHHIDGSGFLKYNSDYITRKHLRKNRTQATAEYVDSASDPEKQTGKSRYHPSEEIRASLPQNDGDSRLSPAETTRTIIEVNNKGTLMLTGSIGDGVHENILWPDIPYITDQNGNLYFQVKEDEDVMQSVTSENNYVQVIVGFDTMEMIKEMELMGLSDSDFETEDDESGDDDSEDTGEDEDEEEWVAILEDEDEDDDDDDDDDEDDDDSDSDESLGDWANLETMRSCHPMFFAKRMTEVASNDPVDWMDQPSAGLAIQGLLSHILVEDYSDIQKKLADSNSTTNGNKDAENLVDKLEDNSKAGGDESEIDSSQDEKARNVVAFYKLEMIRIQLITAQGDQTEVEVEDVRKAQPDAIAHASAEIISRLEESGDKITEALKSLCWRHNSIQAEEVKLIGIDSLGFDLRLCAGAKIESLRFAFSTRATSEENAEGQIRKLLFPKTNQSTQPKPK.

Disordered regions lie at residues 76 to 118 (QATA…RLSP) and 208 to 268 (DFET…DWAN). The segment covering 87-104 (DPEKQTGKSRYHPSEEIR) has biased composition (basic and acidic residues). The segment covering 208–263 (DFETEDDESGDDDSEDTGEDEDEEEWVAILEDEDEDDDDDDDDDEDDDDSDSDESL) has biased composition (acidic residues). Ser-355 is subject to Phosphoserine. A disordered region spans residues 478 to 499 (AEGQIRKLLFPKTNQSTQPKPK). The segment covering 489 to 499 (KTNQSTQPKPK) has biased composition (polar residues).

This is an uncharacterized protein from Arabidopsis thaliana (Mouse-ear cress).